Consider the following 796-residue polypeptide: RalBP1-associated Eps domain-containing protein 1 (796 aa).

Positions 10–113 (EQKYYSDLFS…SKNEQESRHA (104 aa)) constitute an EH 1 domain. The interval 105–237 (KNEQESRHAA…ENWVSFADTP (133 aa)) is disordered. Over residues 115–126 (SYSSDSENQGSY) the composition is skewed to polar residues. Phosphoserine occurs at positions 143, 145, 162, 166, and 170. The segment covering 145–156 (SHDTVQPRTSAD) has biased composition (polar residues). Residue Thr-173 is modified to Phosphothreonine. A phosphoserine mark is found at Ser-272 and Ser-273. In terms of domain architecture, EH 2 spans 285–374 (QRQYYVNQFK…ESLMPKLIDL (90 aa)). Residue Tyr-288 is modified to Phosphotyrosine. A Phosphoserine modification is found at Ser-307. An EF-hand domain is found at 318-353 (LPILELSHIWELSDFDKDGALTLDEFCAAFHLVVAR). Ca(2+) is bound by residues Asp-331, Asp-333, Asp-335, and Glu-342. Residues 377 to 433 (SADVGDQPGEVGYSGSPAEAPPSKSPSMPSLNQTWPELNQSSEQWETFSERSSSSQT) are disordered. Residues 407 to 433 (LNQTWPELNQSSEQWETFSERSSSSQT) are compositionally biased toward polar residues. Phosphoserine is present on residues Ser-475, Ser-482, Ser-489, and Ser-540. The segment covering 506 to 543 (GNTVADGYSSSDSFTSDPEQIGSNVTRQRSHSGTSPDN) has biased composition (polar residues). Disordered regions lie at residues 506–624 (GNTV…IPEQ) and 638–725 (ASNV…QKTG). A Phosphothreonine modification is found at Thr-544. Positions 544–554 (TAPPPPPPRPQ) are enriched in pro residues. Ser-562 carries the post-translational modification Phosphoserine. The segment covering 563–574 (LDMNRTFTVTTG) has biased composition (polar residues). The span at 575 to 584 (QQQAGVVAHP) shows a compositional bias: low complexity. Positions 585–596 (PAVPPRPQPSQA) are enriched in pro residues. The segment covering 612–623 (THTSTSPQQIPE) has biased composition (polar residues). Residues 652-796 (HPEVLPAEKA…LEQLRPFSHL (145 aa)) are interaction with RALBP1. Composition is skewed to basic and acidic residues over residues 671 to 681 (AKTDSKTEEKT) and 708 to 722 (KSED…EHTQ). A phosphoserine mark is found at Ser-709 and Ser-740. Residues 751–791 (SIRRNKETNTVLARLNSELQQQLKDVLEERISLEVQLEQLR) are a coiled coil.

Homodimer (Potential). Interacts with RAB11FIP2. Interacts with RALBP1, CRK and GRB2. Binding to RALBP1 does not affect its Ral-binding activity. Forms a complex with the SH3 domains of CRK and GRB2 which may link it to an EGF-responsive tyrosine kinase. Interacts with AMPH, ITSN1 (via SH3 domains) and SGIP1; may be involved in clathrin-mediated endocytosis. EGF stimulates phosphorylation on Tyr-residues. As to expression, widely expressed with highest levels in heart and testis.

Its subcellular location is the membrane. It localises to the clathrin-coated pit. Its function is as follows. May coordinate the cellular actions of activated EGF receptors and Ral-GTPases. This is RalBP1-associated Eps domain-containing protein 1 (REPS1) from Homo sapiens (Human).